The following is a 166-amino-acid chain: Biotin carboxyl carrier protein of acetyl-CoA carboxylase (166 aa).

Residues 61–70 show a composition bias toward polar residues; sequence STASEASSPA. Residues 61 to 82 are disordered; the sequence is STASEASSPASVKDVPVEEQPQ. In terms of domain architecture, Biotinyl-binding spans 90-166; it reads GDIVESPLVG…EFGQGLVRIK (77 aa). At lysine 132 the chain carries N6-biotinyllysine.

As to quaternary structure, homodimer.

It participates in lipid metabolism; fatty acid biosynthesis. In terms of biological role, this protein is a component of the acetyl coenzyme A carboxylase complex; first, biotin carboxylase catalyzes the carboxylation of the carrier protein and then the transcarboxylase transfers the carboxyl group to form malonyl-CoA. The protein is Biotin carboxyl carrier protein of acetyl-CoA carboxylase of Streptococcus pyogenes serotype M6 (strain ATCC BAA-946 / MGAS10394).